Here is a 498-residue protein sequence, read N- to C-terminus: MSHNEKIQDENKLIAERRQKLQKIRDTQKIAFPNDARPTHKAAQLHRDFDHGDEAALSQAGTVAIAGRMMGKRVMGKASFVHVQDGSGEQIQLYVSSDALTEEVYEEFKTWDVGDIIFASGSLFRTKTGELTVQTNAIRLLTKSLRPLPDKFHGLTDQEIRYRQRYVDLMVNAQSRDVFKARSKIISYIRHFFEARDFLEVETPMMHPIPGGAAAKPFITHHNALDMPLYLRIAPELYLKRLVVGGFERVFEINRNFRNEGVSARHNPEFTMLEFYQAYADYNDLMDLSEVLFQGLAQTILGTTKFDYQGTEIDFSQFRRLPMRDAVCQYVPEAANILEDAPKMVQLLKEKFHIDAGNESDCGKLMTMIFEEGVEHLLIQPTFVIEYPAVVSPLSRRNDENPDITDRFELFIGGREIANGFSELNDAEDQAERFKEQAAAFEAGDEEAMHYDGDFVRALEYGLPPTAGQGIGIDRLVMLLTNAPSIRDVLLFPHMRPE.

Mg(2+)-binding residues include Glu409 and Glu416.

This sequence belongs to the class-II aminoacyl-tRNA synthetase family. As to quaternary structure, homodimer. Mg(2+) is required as a cofactor.

The protein localises to the cytoplasm. The enzyme catalyses tRNA(Lys) + L-lysine + ATP = L-lysyl-tRNA(Lys) + AMP + diphosphate. The protein is Lysine--tRNA ligase of Dichelobacter nodosus (strain VCS1703A).